The following is a 122-amino-acid chain: Large ribosomal subunit protein uL14 (122 aa).

Belongs to the universal ribosomal protein uL14 family. As to quaternary structure, part of the 50S ribosomal subunit. Forms a cluster with proteins L3 and L19. In the 70S ribosome, L14 and L19 interact and together make contacts with the 16S rRNA in bridges B5 and B8.

In terms of biological role, binds to 23S rRNA. Forms part of two intersubunit bridges in the 70S ribosome. This is Large ribosomal subunit protein uL14 from Clostridioides difficile (strain 630) (Peptoclostridium difficile).